The sequence spans 336 residues: CASP-like protein UU1 (336 aa).

Topologically, residues 1 to 170 (MGKGPGLDPS…PAMESNKDDN (170 aa)) are cytoplasmic. The helical transmembrane segment at 171-191 (FFGAIVLSLRAAQIVFTVVGL) threads the bilayer. Residues 192–222 (GVMGSLKHTSHGDYYYYYYDFSFTQVDSYIG) lie on the Extracellular side of the membrane. Residues 223-243 (VLSLDVIVCLYAIVQLVLCFI) traverse the membrane as a helical segment. The Cytoplasmic segment spans residues 244-261 (QRSNQGKYLSSPTTVAAK). The chain crosses the membrane as a helical span at residues 262–282 (LTFVFDQVLAYALVATAGAAA). Residues 283–307 (GSALEIRKGTSCSGTWTVICSKGEA) are Extracellular-facing. A helical transmembrane segment spans residues 308 to 328 (SVAMSFFAFAFLAATAAVYSV). Residues 329–336 (RLLRITGR) are Cytoplasmic-facing.

This sequence belongs to the Casparian strip membrane proteins (CASP) family. In terms of assembly, homodimer and heterodimers.

It is found in the cell membrane. The protein is CASP-like protein UU1 of Physcomitrium patens (Spreading-leaved earth moss).